The sequence spans 225 residues: PKHD-type hydroxylase YbiX (225 aa).

In terms of domain architecture, Fe2OG dioxygenase spans 78–177; it reads TLSTPLFNRY…RVASFMWIQS (100 aa). Residues His96, Asp98, and His158 each contribute to the Fe cation site. Arg168 contacts 2-oxoglutarate.

It depends on Fe(2+) as a cofactor. L-ascorbate is required as a cofactor.

In Escherichia coli (strain K12 / DH10B), this protein is PKHD-type hydroxylase YbiX.